A 147-amino-acid polypeptide reads, in one-letter code: Sec-independent protein translocase protein TatB (147 aa).

The helical transmembrane segment at 1-21 threads the bilayer; the sequence is MFDVSFTELMVIGVIALVVIG. Residues 67–147 form a disordered region; that stretch reads DETARSMQTS…DKTPPTGSAT (81 aa). Over residues 93 to 103 the composition is skewed to basic and acidic residues; it reads AELDDTARDAS. Composition is skewed to low complexity over residues 109 to 120 and 129 to 147; these read ADAPAEPAPAVA and APPA…GSAT.

The protein belongs to the TatB family. As to quaternary structure, the Tat system comprises two distinct complexes: a TatABC complex, containing multiple copies of TatA, TatB and TatC subunits, and a separate TatA complex, containing only TatA subunits. Substrates initially bind to the TatABC complex, which probably triggers association of the separate TatA complex to form the active translocon.

It localises to the cell inner membrane. Functionally, part of the twin-arginine translocation (Tat) system that transports large folded proteins containing a characteristic twin-arginine motif in their signal peptide across membranes. Together with TatC, TatB is part of a receptor directly interacting with Tat signal peptides. TatB may form an oligomeric binding site that transiently accommodates folded Tat precursor proteins before their translocation. In Bordetella pertussis (strain Tohama I / ATCC BAA-589 / NCTC 13251), this protein is Sec-independent protein translocase protein TatB.